The chain runs to 617 residues: Neurosecretory protein VGF (617 aa).

A signal peptide spans 1–23 (MKTFTLPASVLFCFLLLIRGLGA). Disordered stretches follow at residues 29-75 (SDVY…GELF), 94-113 (PASP…EEAA), 121-157 (VRSQ…DRSE), and 169-192 (LRDF…ETRT). Basic and acidic residues predominate over residues 48–64 (AVSRPKDDSVPEVRAAR). Residues 148-157 (NDPEADDRSE) show a composition bias toward acidic residues. Residue glutamine 180 is modified to Pyrrolidone carboxylic acid. The span at 182-192 (ETAAAETETRT) shows a compositional bias: low complexity. At glutamine 313 the chain carries Pyrrolidone carboxylic acid. The interval 348–603 (DLGGRGLQET…AEERRLQEQE (256 aa)) is disordered. The span at 378–397 (EDEVGEEDEEAAEAEAEAEE) shows a compositional bias: acidic residues. The span at 418-436 (AEDKRSQEEAPGHRRKDAE) shows a compositional bias: basic and acidic residues. Phosphoserine is present on serine 423. Over residues 437-452 (GTEEGGEEDDDDEEMD) the composition is skewed to acidic residues. Residues 491 to 501 (PPEPVPPPRAA) show a composition bias toward pro residues. Over residues 577-601 (HHPDLEAQARRAQEEADAEERRLQE) the composition is skewed to basic and acidic residues.

In terms of assembly, interacts with HSPA8 on cell membrane. Interacts with C3AR1. Interacts with C1QBP. Multiple peptides are derived from VGF, with activities in synaptic plasticity, antidepression, penile erection, autonomic activation, and increases in energy expenditure. In terms of tissue distribution, central and peripheral nervous systems, synthesized exclusively in neuronal and neuroendocrine cells. VGF and several of the derived peptides are present in the brain.

The protein resides in the secreted. It localises to the cytoplasmic vesicle. Its subcellular location is the secretory vesicle. In terms of biological role, secreted polyprotein that is packaged and proteolytically processed by prohormone convertases PCSK1 and PCSK2 in a cell-type-specific manner. VGF and peptides derived from its processing play many roles in neurogenesis and neuroplasticity associated with learning, memory, depression and chronic pain. Its function is as follows. Plays a role in the control of body fluid homeostasis by regulating vasopressin release. Suppresses presynaptic glutamatergic neurons connected to vasopressin neurons. Functionally, plays a role in the control of body fluid homeostasis by regulating vasopressin release. Activates GABAergic interneurons which are inhibitory neurons of the nervous system and thereby suppresses presynaptic glutamatergic neurons. Also stimulates feeding behavior in an orexin-dependent manner in the hypothalamus. Functions as a positive regulator for the activation of orexin neurons resulting in elevated gastric acid secretion and gastric emptying. Secreted multifunctional neuropeptide that binds to different cell receptors and thereby plays multiple physiological roles including modulation of energy expenditure, pain, response to stress, gastric regulation, glucose homeostasis as well as lipolysis. Activates the G-protein-coupled receptor C3AR1 via a folding-upon-binding mechanism leading to enhanced lipolysis in adipocytes. Interacts with C1QBP receptor in macrophages and microglia causing increased levels of intracellular calcium and hypersensitivity. In terms of biological role, plays a role in the regulation of memory formation and depression-related behaviors potentially by influencing synaptic plasticity and neurogenesis. Induces acute and transient activation of the NTRK2/TRKB receptor and subsequent CREB phosphorylation. Also induces insulin secretion in insulinoma cells by increasing intracellular calcium mobilization. The polypeptide is Neurosecretory protein VGF (Vgf) (Rattus norvegicus (Rat)).